Reading from the N-terminus, the 179-residue chain is Riboflavin kinase (179 aa).

CDP is bound at residue 61-66 (GDGEGR). Mg(2+)-binding residues include threonine 90 and asparagine 92. FMN contacts are provided by threonine 147 and glutamate 155. 160-163 (VELR) provides a ligand contact to CDP.

This sequence belongs to the archaeal riboflavin kinase family. Mg(2+) serves as cofactor.

It carries out the reaction riboflavin + CTP = CDP + FMN + H(+). Its pathway is cofactor biosynthesis; FMN biosynthesis; FMN from riboflavin (CTP route): step 1/1. Functionally, catalyzes the CTP-dependent phosphorylation of riboflavin (vitamin B2) to form flavin mononucleotide (FMN). The sequence is that of Riboflavin kinase from Ignicoccus hospitalis (strain KIN4/I / DSM 18386 / JCM 14125).